The primary structure comprises 146 residues: Small ribosomal subunit protein uS5 (146 aa).

The 64-residue stretch at phenylalanine 8 to valine 71 folds into the S5 DRBM domain.

The protein belongs to the universal ribosomal protein uS5 family. In terms of assembly, part of the 30S ribosomal subunit. Contacts proteins S4 and S8.

Its function is as follows. With S4 and S12 plays an important role in translational accuracy. Located at the back of the 30S subunit body where it stabilizes the conformation of the head with respect to the body. The chain is Small ribosomal subunit protein uS5 from Aliarcobacter butzleri (strain RM4018) (Arcobacter butzleri).